We begin with the raw amino-acid sequence, 146 residues long: MTKKIEEKIEGVIESLGYLLYDVSLVKENEQHVLRVSLKNPNGAVSLDICQQVSEVISPLLDVCDFIQDAYILEVSSMGLERTLKTPKHFKLSLGEKVEVKLINKESFQAVLKDANDLSADFELEDHAIKSVGYKDLKKVKTLFEW.

The protein belongs to the RimP family.

Its subcellular location is the cytoplasm. Required for maturation of 30S ribosomal subunits. This Helicobacter pylori (strain HPAG1) protein is Ribosome maturation factor RimP.